The following is a 352-amino-acid chain: N-acetyl-gamma-glutamyl-phosphate reductase (352 aa).

C149 is a catalytic residue.

Belongs to the NAGSA dehydrogenase family. Type 1 subfamily.

Its subcellular location is the cytoplasm. It carries out the reaction N-acetyl-L-glutamate 5-semialdehyde + phosphate + NADP(+) = N-acetyl-L-glutamyl 5-phosphate + NADPH + H(+). It participates in amino-acid biosynthesis; L-arginine biosynthesis; N(2)-acetyl-L-ornithine from L-glutamate: step 3/4. Catalyzes the NADPH-dependent reduction of N-acetyl-5-glutamyl phosphate to yield N-acetyl-L-glutamate 5-semialdehyde. This Polynucleobacter asymbioticus (strain DSM 18221 / CIP 109841 / QLW-P1DMWA-1) (Polynucleobacter necessarius subsp. asymbioticus) protein is N-acetyl-gamma-glutamyl-phosphate reductase.